The sequence spans 153 residues: Large ribosomal subunit protein uL22 (153 aa).

Positions 128–153 (ADRRARRAAAKPAASASPAANEGVPA) are disordered. A compositionally biased stretch (low complexity) spans 137–147 (AKPAASASPAA).

The protein belongs to the universal ribosomal protein uL22 family. In terms of assembly, part of the 50S ribosomal subunit.

Its function is as follows. This protein binds specifically to 23S rRNA; its binding is stimulated by other ribosomal proteins, e.g. L4, L17, and L20. It is important during the early stages of 50S assembly. It makes multiple contacts with different domains of the 23S rRNA in the assembled 50S subunit and ribosome. Functionally, the globular domain of the protein is located near the polypeptide exit tunnel on the outside of the subunit, while an extended beta-hairpin is found that lines the wall of the exit tunnel in the center of the 70S ribosome. This chain is Large ribosomal subunit protein uL22, found in Acidiphilium cryptum (strain JF-5).